Consider the following 109-residue polypeptide: ATPase inhibitor, mitochondrial (109 aa).

The transit peptide at 1-22 (MAGSSSLLRAGIRNVLLMQMRR) directs the protein to the mitochondrion. Residues 27 to 56 (LGELGKGAGKGGGGGGSVREAGGAFGKRQA) are N-terminal inhibitory region. Positions 27–109 (LGELGKGAGK…KSKIKKLNDD (83 aa)) are disordered. Residues 30–43 (LGKGAGKGGGGGGS) show a composition bias toward gly residues. Composition is skewed to basic and acidic residues over residues 55–69 (QAAEEERYFRQKEQE) and 77–98 (HHEEEIRHHKGEIERLQKEIER). Residues 71-109 (IASLRKHHEEEIRHHKGEIERLQKEIERHKSKIKKLNDD) adopt a coiled-coil conformation. The tract at residues 78-109 (HEEEIRHHKGEIERLQKEIERHKSKIKKLNDD) is antiparallel alpha-helical coiled coil region. Residues 99–109 (HKSKIKKLNDD) show a composition bias toward basic residues.

It belongs to the ATPase inhibitor family. In terms of assembly, homodimer; represents the active form and is present at a pH value below 6.5. Homotetramer; represents the inactive form and is present at a pH value above 7.0.

Its subcellular location is the mitochondrion. Endogenous F(1)F(o)-ATPase inhibitor limiting ATP depletion when the mitochondrial membrane potential falls below a threshold and the F(1)F(o)-ATP synthase starts hydrolyzing ATP to pump protons out of the mitochondrial matrix. Required to avoid the consumption of cellular ATP when the F(1)F(o)-ATP synthase enzyme acts as an ATP hydrolase. Indirectly acts as a regulator of heme synthesis in erythroid tissues: regulates heme synthesis by modulating the mitochondrial pH and redox potential, allowing fech to efficiently catalyze the incorporation of iron into protoporphyrin IX to produce heme. The sequence is that of ATPase inhibitor, mitochondrial from Xenopus tropicalis (Western clawed frog).